We begin with the raw amino-acid sequence, 88 residues long: Small ribosomal subunit protein bS18B (88 aa).

Belongs to the bacterial ribosomal protein bS18 family. Part of the 30S ribosomal subunit. Forms a tight heterodimer with protein bS6.

Its function is as follows. Binds as a heterodimer with protein bS6 to the central domain of the 16S rRNA, where it helps stabilize the platform of the 30S subunit. The chain is Small ribosomal subunit protein bS18B from Mycolicibacterium paratuberculosis (strain ATCC BAA-968 / K-10) (Mycobacterium paratuberculosis).